Consider the following 285-residue polypeptide: Ribose-phosphate pyrophosphokinase (285 aa).

ATP-binding positions include 33–35 and 91–92; these read DGE and RQ. Positions 125 and 162 each coordinate Mg(2+). Lysine 185 is an active-site residue. D-ribose 5-phosphate is bound by residues arginine 187, aspartate 211, and 215 to 219; that span reads STGGT.

This sequence belongs to the ribose-phosphate pyrophosphokinase family. Class III (archaeal) subfamily. It depends on Mg(2+) as a cofactor.

It localises to the cytoplasm. It catalyses the reaction D-ribose 5-phosphate + ATP = 5-phospho-alpha-D-ribose 1-diphosphate + AMP + H(+). The protein operates within metabolic intermediate biosynthesis; 5-phospho-alpha-D-ribose 1-diphosphate biosynthesis; 5-phospho-alpha-D-ribose 1-diphosphate from D-ribose 5-phosphate (route I): step 1/1. Its function is as follows. Involved in the biosynthesis of the central metabolite phospho-alpha-D-ribosyl-1-pyrophosphate (PRPP) via the transfer of pyrophosphoryl group from ATP to 1-hydroxyl of ribose-5-phosphate (Rib-5-P). The polypeptide is Ribose-phosphate pyrophosphokinase (Methanothermobacter thermautotrophicus (strain ATCC 29096 / DSM 1053 / JCM 10044 / NBRC 100330 / Delta H) (Methanobacterium thermoautotrophicum)).